The primary structure comprises 324 residues: Elongation factor P--(R)-beta-lysine ligase (324 aa).

75 to 77 is a substrate binding site; it reads SPE. Residues 99–101 and Asn108 each bind ATP; that span reads RNE. Tyr117 serves as a coordination point for substrate. 243–244 contributes to the ATP binding site; the sequence is EL. Residue Glu250 coordinates substrate. ATP is bound at residue Gly299.

The protein belongs to the class-II aminoacyl-tRNA synthetase family. EpmA subfamily. Homodimer.

It carries out the reaction D-beta-lysine + L-lysyl-[protein] + ATP = N(6)-((3R)-3,6-diaminohexanoyl)-L-lysyl-[protein] + AMP + diphosphate + H(+). With EpmB is involved in the beta-lysylation step of the post-translational modification of translation elongation factor P (EF-P). Catalyzes the ATP-dependent activation of (R)-beta-lysine produced by EpmB, forming a lysyl-adenylate, from which the beta-lysyl moiety is then transferred to the epsilon-amino group of a conserved specific lysine residue in EF-P. In Pseudoalteromonas translucida (strain TAC 125), this protein is Elongation factor P--(R)-beta-lysine ligase.